The primary structure comprises 203 residues: Urease accessory protein UreG (203 aa).

10–17 (GPVGAGKT) lines the GTP pocket.

It belongs to the SIMIBI class G3E GTPase family. UreG subfamily. As to quaternary structure, homodimer. UreD, UreF and UreG form a complex that acts as a GTP-hydrolysis-dependent molecular chaperone, activating the urease apoprotein by helping to assemble the nickel containing metallocenter of UreC. The UreE protein probably delivers the nickel.

Its subcellular location is the cytoplasm. Its function is as follows. Facilitates the functional incorporation of the urease nickel metallocenter. This process requires GTP hydrolysis, probably effectuated by UreG. In Kocuria rhizophila (strain ATCC 9341 / DSM 348 / NBRC 103217 / DC2201), this protein is Urease accessory protein UreG.